Reading from the N-terminus, the 179-residue chain is O-acetyl-ADP-ribose deacetylase (179 aa).

The region spanning 1–175 (MTSRLQVIQG…LYARLLTQQG (175 aa)) is the Macro domain. Residues 11-12 (DI), N25, 33-35 (GVD), and 122-126 (STGVY) each bind substrate. The Proton acceptor role is filled by D35.

Belongs to the MacroD-type family. YmdB subfamily. Homodimer. Interacts with RNase III.

The enzyme catalyses 3''-O-acetyl-ADP-D-ribose + H2O = ADP-D-ribose + acetate + H(+). The catalysed reaction is 2''-O-acetyl-ADP-D-ribose + H2O = ADP-D-ribose + acetate + H(+). Its function is as follows. Deacetylates O-acetyl-ADP ribose to yield ADP-ribose and free acetate. Down-regulates ribonuclease 3 (RNase III) activity. Acts by interacting directly with the region of the ribonuclease that is required for dimerization/activation. This is O-acetyl-ADP-ribose deacetylase from Salmonella newport (strain SL254).